Here is a 340-residue protein sequence, read N- to C-terminus: Ketol-acid reductoisomerase (NADP(+)) (340 aa).

The 180-residue stretch at 3–182 (VTMYYEDDVE…GCARVGIIET (180 aa)) folds into the KARI N-terminal Rossmann domain. NADP(+)-binding positions include 26-29 (YGSQ), arginine 49, serine 53, and 83-86 (DELQ). Residue histidine 108 is part of the active site. An NADP(+)-binding site is contributed by glycine 134. Residues 183 to 328 (TFKEETEEDL…AELRKAMPFT (146 aa)) form the KARI C-terminal knotted domain. Positions 191, 195, 227, and 231 each coordinate Mg(2+). Serine 252 lines the substrate pocket.

Belongs to the ketol-acid reductoisomerase family. It depends on Mg(2+) as a cofactor.

The enzyme catalyses (2R)-2,3-dihydroxy-3-methylbutanoate + NADP(+) = (2S)-2-acetolactate + NADPH + H(+). It carries out the reaction (2R,3R)-2,3-dihydroxy-3-methylpentanoate + NADP(+) = (S)-2-ethyl-2-hydroxy-3-oxobutanoate + NADPH + H(+). It functions in the pathway amino-acid biosynthesis; L-isoleucine biosynthesis; L-isoleucine from 2-oxobutanoate: step 2/4. The protein operates within amino-acid biosynthesis; L-valine biosynthesis; L-valine from pyruvate: step 2/4. In terms of biological role, involved in the biosynthesis of branched-chain amino acids (BCAA). Catalyzes an alkyl-migration followed by a ketol-acid reduction of (S)-2-acetolactate (S2AL) to yield (R)-2,3-dihydroxy-isovalerate. In the isomerase reaction, S2AL is rearranged via a Mg-dependent methyl migration to produce 3-hydroxy-3-methyl-2-ketobutyrate (HMKB). In the reductase reaction, this 2-ketoacid undergoes a metal-dependent reduction by NADPH to yield (R)-2,3-dihydroxy-isovalerate. This chain is Ketol-acid reductoisomerase (NADP(+)), found in Lactococcus lactis subsp. lactis (strain IL1403) (Streptococcus lactis).